A 134-amino-acid polypeptide reads, in one-letter code: Small ribosomal subunit protein uS8 (134 aa).

The protein belongs to the universal ribosomal protein uS8 family. As to quaternary structure, part of the 30S ribosomal subunit. Contacts proteins S5 and S12.

Its function is as follows. One of the primary rRNA binding proteins, it binds directly to 16S rRNA central domain where it helps coordinate assembly of the platform of the 30S subunit. This Pseudothermotoga lettingae (strain ATCC BAA-301 / DSM 14385 / NBRC 107922 / TMO) (Thermotoga lettingae) protein is Small ribosomal subunit protein uS8.